The sequence spans 200 residues: MELQVVGATALSVSETTFGREFNEALIHQVVVAYAAGARQGTRAQKTRAEVSGSGKKPWRQKGTGRARSGDIKSPIWRSGGVTFAAKPQDHSQKVNKKMYRGAIKSILSELVRQDRLVVVDKFEIDAPKTKVLVQKLKDMALTDALIITASLDENLFLAARNLYKVDVRDVQGIDPVSLIAFDKVVITVDAVKQIEEMLA.

The interval 43–70 (RAQKTRAEVSGSGKKPWRQKGTGRARSG) is disordered.

It belongs to the universal ribosomal protein uL4 family. As to quaternary structure, part of the 50S ribosomal subunit.

Functionally, one of the primary rRNA binding proteins, this protein initially binds near the 5'-end of the 23S rRNA. It is important during the early stages of 50S assembly. It makes multiple contacts with different domains of the 23S rRNA in the assembled 50S subunit and ribosome. Forms part of the polypeptide exit tunnel. The chain is Large ribosomal subunit protein uL4 from Glaesserella parasuis serovar 5 (strain SH0165) (Haemophilus parasuis).